We begin with the raw amino-acid sequence, 51 residues long: Large ribosomal subunit protein eL39 (51 aa).

Belongs to the eukaryotic ribosomal protein eL39 family. Part of the 50S ribosomal subunit.

This Thermococcus kodakarensis (strain ATCC BAA-918 / JCM 12380 / KOD1) (Pyrococcus kodakaraensis (strain KOD1)) protein is Large ribosomal subunit protein eL39.